The primary structure comprises 149 residues: MDIVAENRKVRFNYTILSEYDAGIVLLGSEVKSLRQHKVSMGDAYVLESGMELWVHNLHISEYNRSSYKNHSPLRVRKLLLRRREINKIAGSVKASGITVVPRLVYFNERGLAKVRIALVKGKKLYDKREAIKAREWEREKGRTMKRDI.

This sequence belongs to the SmpB family.

It is found in the cytoplasm. Functionally, required for rescue of stalled ribosomes mediated by trans-translation. Binds to transfer-messenger RNA (tmRNA), required for stable association of tmRNA with ribosomes. tmRNA and SmpB together mimic tRNA shape, replacing the anticodon stem-loop with SmpB. tmRNA is encoded by the ssrA gene; the 2 termini fold to resemble tRNA(Ala) and it encodes a 'tag peptide', a short internal open reading frame. During trans-translation Ala-aminoacylated tmRNA acts like a tRNA, entering the A-site of stalled ribosomes, displacing the stalled mRNA. The ribosome then switches to translate the ORF on the tmRNA; the nascent peptide is terminated with the 'tag peptide' encoded by the tmRNA and targeted for degradation. The ribosome is freed to recommence translation, which seems to be the essential function of trans-translation. The sequence is that of SsrA-binding protein from Anaplasma phagocytophilum (strain HZ).